The sequence spans 148 residues: NADPH-dependent 7-cyano-7-deazaguanine reductase (148 aa).

Cys-50 serves as the catalytic Thioimide intermediate. Catalysis depends on Asp-57, which acts as the Proton donor. Residues 72-74 (VES) and 91-92 (HE) contribute to the substrate site.

This sequence belongs to the GTP cyclohydrolase I family. QueF type 1 subfamily.

The protein resides in the cytoplasm. It catalyses the reaction 7-aminomethyl-7-carbaguanine + 2 NADP(+) = 7-cyano-7-deazaguanine + 2 NADPH + 3 H(+). It participates in tRNA modification; tRNA-queuosine biosynthesis. Its function is as follows. Catalyzes the NADPH-dependent reduction of 7-cyano-7-deazaguanine (preQ0) to 7-aminomethyl-7-deazaguanine (preQ1). The sequence is that of NADPH-dependent 7-cyano-7-deazaguanine reductase from Helicobacter pylori (strain P12).